Consider the following 254-residue polypeptide: Bidirectional sugar transporter SWEET6b (254 aa).

Over 1–9 (MISPDAARN) the chain is Extracellular. Residues 10–30 (VVGIIGNVISFGLFLAPVPTF) form a helical membrane-spanning segment. The 89-residue stretch at 10–98 (VVGIIGNVIS…IFFLYSPNKK (89 aa)) folds into the MtN3/slv 1 domain. The Cytoplasmic segment spans residues 31–45 (WRICKRKDVEEFKAD). The helical transmembrane segment at 46 to 66 (PYLATLLNCMLWVFYGIPIVH) threads the bilayer. Residues 67–69 (PNS) are Extracellular-facing. Residues 70-90 (ILVVTINGIGLVVEGTYLFIF) traverse the membrane as a helical segment. The Cytoplasmic portion of the chain corresponds to 91–101 (FLYSPNKKRLR). A helical membrane pass occupies residues 102–122 (MLAVLGVELVFMLAVILGVLL). Over 123 to 131 (GAHTHKKRS) the chain is Extracellular. Residues 132-152 (MIVGILCVFFGSIMYFSPLTI) form a helical membrane-spanning segment. The MtN3/slv 2 domain maps to 133–216 (IVGILCVFFG…LILYACYYRT (84 aa)). Residues 153–165 (MGKVIKTKSVEYM) are Cytoplasmic-facing. Residues 166-186 (PFFLSLVCFLNGVCWTAYALI) traverse the membrane as a helical segment. The Extracellular portion of the chain corresponds to 187–189 (RFD). The chain crosses the membrane as a helical span at residues 190 to 210 (IYVTIPNSLGAIFGAIQLILY). At 211–254 (ACYYRTTPKKTKAAKDVEMPSVISGPGAAATASGGSVVSVTVER) the chain is on the cytoplasmic side.

It belongs to the SWEET sugar transporter family. As to quaternary structure, forms homooligomers and/or heterooligomers.

It is found in the cell membrane. In terms of biological role, mediates both low-affinity uptake and efflux of sugar across the plasma membrane. The chain is Bidirectional sugar transporter SWEET6b (SWEET6B) from Oryza sativa subsp. indica (Rice).